A 519-amino-acid polypeptide reads, in one-letter code: T-complex protein 1 subunit gamma (519 aa).

This sequence belongs to the TCP-1 chaperonin family. In terms of assembly, component of the T-complex protein 1 (TCP1) complex.

It localises to the cytoplasm. In terms of biological role, molecular chaperone; assists the folding of proteins upon ATP hydrolysis. The polypeptide is T-complex protein 1 subunit gamma (CCT3) (Encephalitozoon cuniculi (strain GB-M1) (Microsporidian parasite)).